The chain runs to 386 residues: Glycerate dehydrogenase HPR, peroxisomal (386 aa).

NAD(+)-binding positions include 175–176 (RI), 271–273 (CSR), and D297. Residue R273 is part of the active site. E302 is a catalytic residue. Catalysis depends on H320, which acts as the Proton donor. Position 320-323 (320-323 (HIAS)) interacts with NAD(+). Residues 384–386 (SKL) carry the Microbody targeting signal motif.

The protein belongs to the D-isomer specific 2-hydroxyacid dehydrogenase family. In terms of tissue distribution, present in leaves (at protein level). Mostly expressed in photosynthetic tissues such as leaves, stems, flowers, buds, and, to a lower extent, in siliques and roots.

The protein localises to the peroxisome. It carries out the reaction (R)-glycerate + NAD(+) = 3-hydroxypyruvate + NADH + H(+). The protein operates within photosynthesis; photorespiration; 3-phospho-D-glycerate from glycine: step 3/4. With respect to regulation, slightly inhibited by oxalate. In terms of biological role, catalyzes the NADH-dependent reduction of hydroxypyruvate into glycerate in the photorespiratory core cycle. Mediates fatty acid beta-oxidation in germinating seeds when malate dehydrogenase is absent. The polypeptide is Glycerate dehydrogenase HPR, peroxisomal (HPR) (Arabidopsis thaliana (Mouse-ear cress)).